The following is a 467-amino-acid chain: Nuclear distribution protein nudF 1 (467 aa).

In terms of domain architecture, LisH spans 9 to 41; it reads QAEELHKSIIAYLASVNLSESATTLRAELGDAV. Residues 60–87 adopt a coiled-coil conformation; that stretch reads TSVVRLQKKIMDLESRCAALQSELDSAT. 8 WD repeats span residues 113–154, 156–196, 200–247, 250–289, 292–352, 354–393, 398–428, and 429–466; these read SHRS…RTVK, HTKA…KNIR, GHDH…CVKT, GHVD…TRST, GHEH…IKTL, GHDN…KCVR, THEH…NGTP, and AATT…RVFA. Residues 417–437 are compositionally biased toward low complexity; the sequence is GANGDAGANGTPAATTTSNGA. The segment at 417–441 is disordered; it reads GANGDAGANGTPAATTTSNGARQDP.

This sequence belongs to the WD repeat LIS1/nudF family. Self-associates. Interacts with nudE and dynein.

Its subcellular location is the cytoplasm. The protein localises to the cytoskeleton. The protein resides in the spindle pole. Positively regulates the activity of the minus-end directed microtubule motor protein dynein. May enhance dynein-mediated microtubule sliding by targeting dynein to the microtubule plus end. Required for nuclear migration during vegetative growth as well as development. Required for retrograde early endosome (EE) transport from the hyphal tip. Required for localization of dynein to the mitotic spindle poles. Recruits additional proteins to the dynein complex at SPBs. The polypeptide is Nuclear distribution protein nudF 1 (Aspergillus clavatus (strain ATCC 1007 / CBS 513.65 / DSM 816 / NCTC 3887 / NRRL 1 / QM 1276 / 107)).